We begin with the raw amino-acid sequence, 995 residues long: Meckelin (995 aa).

The first 36 residues, 1–36, serve as a signal peptide directing secretion; the sequence is MATRGGAGVAMAVWSLLSARAVTAFLLLFLPRFLQA. The segment at 37 to 280 is cysteine-rich; it reads QTFSFPFQQP…FQFIFENTAG (244 aa). Residues 37–519 are Extracellular-facing; it reads QTFSFPFQQP…SVTYEMDHGE (483 aa). 11 cysteine pairs are disulfide-bonded: Cys-49-Cys-62, Cys-65-Cys-78, Cys-80-Cys-97, Cys-100-Cys-114, Cys-117-Cys-127, Cys-129-Cys-150, Cys-153-Cys-170, Cys-173-Cys-184, Cys-186-Cys-197, Cys-237-Cys-246, and Cys-253-Cys-268. A glycan (N-linked (GlcNAc...) asparagine) is linked at Asn-141. An N-linked (GlcNAc...) asparagine glycan is attached at Asn-179. The N-linked (GlcNAc...) asparagine glycan is linked to Asn-242. Asn-318 is a glycosylation site (N-linked (GlcNAc...) asparagine). Cysteines 357 and 378 form a disulfide. Residues 520 to 548 traverse the membrane as a helical segment; sequence AHVQTDIALGVLGGLAVLASLLKTAGWKR. At 549–558 the chain is on the cytoplasmic side; it reads RIGSPMIDLQ. Residues 559-590 form a helical membrane-spanning segment; the sequence is TVVKFLVYYAGDLANVFFIITVGTGLYWLIFF. Topologically, residues 591–603 are extracellular; that stretch reads KAQKSVSVLLPMP. Residues 604-631 form a helical membrane-spanning segment; it reads IQEERFVTYVGCAFALKALQFLHKLISQ. The Cytoplasmic segment spans residues 632–670; that stretch reads ITIDVFFIDWERPKGKVLKAVEGEGGVRSATVPVSIWRT. The segment at residues 671 to 679 is an intramembrane region (helical); the sequence is YFVANEWNE. Residues 671–701 form a discontinuously helical membrane-spanning segment; it reads YFVANEWNEIQTVRKINSLFQVLTVLFFLEV. An intramembrane segment occupies 680–688; it reads IQTVRKINS. The helical intramembrane region spans 689–701; that stretch reads LFQVLTVLFFLEV. The Extracellular portion of the chain corresponds to 702–731; sequence VGFKNLALMDSSSSLSRNPPSYIAPYSCIL. An intramembrane region (helical) is located at residues 732–757; sequence RYAVSAALWLAIGIIQVVFFAVFYER. Residues 732-771 traverse the membrane as a discontinuously helical segment; that stretch reads RYAVSAALWLAIGIIQVVFFAVFYERFIEDKIRQFVDLCS. Residues 758-762 lie within the membrane without spanning it; sequence FIEDK. Residues 763–771 constitute an intramembrane region (helical); that stretch reads IRQFVDLCS. Topologically, residues 772–926 are cytoplasmic; that stretch reads MSNISVFLLS…SIFYNDEGYS (155 aa). The stretch at 828–917 forms a coiled coil; it reads GQTFEIAISN…MEFMEPMEKS (90 aa). The segment at residues 927–929 is an intramembrane region (helical); sequence FSS. The discontinuously helical transmembrane segment at 927–952 threads the bilayer; the sequence is FSSVLYYGNEATLLIFDLLFFCVVDL. Residues 930–936 lie within the membrane without spanning it; that stretch reads VLYYGNE. The segment at residues 937–952 is an intramembrane region (helical); that stretch reads ATLLIFDLLFFCVVDL. Topologically, residues 953 to 957 are extracellular; that stretch reads ACQNF. A helical transmembrane segment spans residues 958–985; the sequence is ILASFLTYLQQEIFRYIRNTVGQKNLAS. Over 986–995 the chain is Cytoplasmic; it reads KTLVDQRFLI.

Homodimer. Part of the tectonic-like complex (also named B9 complex). Interacts with DNAJB9, DNAJC10 and mutated SFTPC. Interacts with SYNE2 during the early establishment of cell polarity. Interacts (via C-terminus) with FLNA. Interacts with TMEM218. Interacts with WNT5A. Interacts with ROR2. Widely expressed in adult and fetal tissues. Expressed at higher level in spinal cord.

Its subcellular location is the cell membrane. It is found in the endoplasmic reticulum membrane. The protein resides in the cell projection. The protein localises to the cilium. It localises to the cytoplasm. Its subcellular location is the cytoskeleton. It is found in the cilium basal body. Required for ciliary structure and function. Part of the tectonic-like complex which is required for tissue-specific ciliogenesis and may regulate ciliary membrane composition. Involved in centrosome migration to the apical cell surface during early ciliogenesis. Involved in the regulation of cilia length and appropriate number through the control of centrosome duplication. Is a key regulator of stereociliary bundle orientation. Required for epithelial cell branching morphology. Essential for endoplasmic reticulum-associated degradation (ERAD) of surfactant protein C (SFTPC). Involved in the negative regulation of canonical Wnt signaling, and activation of the non-canonical cascade stimulated by WNT5A. In non-canonical Wnt signaling, it may act as ROR2 coreceptor. The sequence is that of Meckelin (TMEM67) from Homo sapiens (Human).